Consider the following 461-residue polypeptide: Zinc transporter 6 (461 aa).

Over 1–33 the chain is Cytoplasmic; it reads MGTIHLFRKPQRSFFGKLLQEFRLVAADRRSWK. A helical membrane pass occupies residues 34–54; the sequence is ILLFGAINLTCTGFLLMWCSS. At 55–64 the chain is on the extracellular side; sequence TNSIALTAYT. The helical transmembrane segment at 65-85 threads the bilayer; it reads YLTIFDLFSLITCLVSYWVMM. The Cytoplasmic portion of the chain corresponds to 86-98; the sequence is RKPSPAYSFGFER. A helical transmembrane segment spans residues 99–119; that stretch reads LEVLAVFASTVLAQLGALFIL. The Extracellular portion of the chain corresponds to 120 to 134; the sequence is KESAERFLEQPEIHT. A helical membrane pass occupies residues 135–155; that stretch reads GRLLVGTFVALSFNLFTMLSI. Residues 156 to 200 lie on the Cytoplasmic side of the membrane; the sequence is RNKPFAYVSEAASTSWLQEHVADLSRSLCGIIPGLSSIFLPRMNP. A helical transmembrane segment spans residues 201–221; it reads FVLIDLAGAFALCITYMLIEI. Residues 222–223 lie on the Extracellular side of the membrane; it reads NN. A helical transmembrane segment spans residues 224 to 244; the sequence is YFAVDTASAIAIALMTFGTMY. Over 245–461 the chain is Cytoplasmic; the sequence is PMSVYSGKVL…TNNRIGQPRP (217 aa). The disordered stretch occupies residues 362 to 393; that stretch reads PPLKGTDDSNPVTSTPTKPSSPPPEFSFNTPG. A compositionally biased stretch (low complexity) spans 370–379; sequence SNPVTSTPTK.

It belongs to the cation diffusion facilitator (CDF) transporter (TC 2.A.4) family. SLC30A subfamily. Heterodimer with SLC30A5; form a functional zinc ion transmembrane transporter.

It localises to the golgi apparatus. The protein localises to the trans-Golgi network membrane. Its function is as follows. Has probably no intrinsic transporter activity but together with SLC30A5 forms a functional zinc ion:proton antiporter heterodimer, mediating zinc entry into the lumen of organelles along the secretory pathway. As part of that zinc ion:proton antiporter, contributes to zinc ion homeostasis within the early secretory pathway and regulates the activation and folding of enzymes like alkaline phosphatases and enzymes involved in phosphatidylinositol glycan anchor biosynthesis. The chain is Zinc transporter 6 (SLC30A6) from Bos taurus (Bovine).